Reading from the N-terminus, the 95-residue chain is Small ribosomal subunit protein bS16 (95 aa).

Belongs to the bacterial ribosomal protein bS16 family.

This chain is Small ribosomal subunit protein bS16, found in Thermotoga neapolitana (strain ATCC 49049 / DSM 4359 / NBRC 107923 / NS-E).